The primary structure comprises 191 residues: Signal peptidase complex catalytic subunit sec11 (191 aa).

The Cytoplasmic portion of the chain corresponds to 1 to 18 (MLSALGGNLSNARQSIAQ). Residues 19 to 39 (VLNFALVLSTAFMLWKGVSIA) traverse the membrane as a helical; Signal-anchor for type II membrane protein segment. Over 40-191 (SNSSSPIVVV…MGLMVILQRE (152 aa)) the chain is Lumenal. Asn41 is a glycosylation site (N-linked (GlcNAc...) asparagine). Active-site charge relay system residues include Ser53, His92, and Asp133. The tract at residues 177–188 (VLLGVMGLMVIL) is C-terminal short (CTS) helix.

Belongs to the peptidase S26B family. In terms of assembly, component of the signal peptidase complex (SPC) composed of a catalytic subunit SEC11 and three accessory subunits SPC1, SPC2 and SPC3. The complex induces a local thinning of the ER membrane which is used to measure the length of the signal peptide (SP) h-region of protein substrates. This ensures the selectivity of the complex towards h-regions shorter than 18-20 amino acids. SPC associates with the translocon complex.

The protein resides in the endoplasmic reticulum membrane. The catalysed reaction is Cleavage of hydrophobic, N-terminal signal or leader sequences from secreted and periplasmic proteins.. Catalytic component of the signal peptidase complex (SPC) which catalyzes the cleavage of N-terminal signal sequences from nascent proteins as they are translocated into the lumen of the endoplasmic reticulum. Specifically cleaves N-terminal signal peptides that contain a hydrophobic alpha-helix (h-region) shorter than 18-20 amino acids. The sequence is that of Signal peptidase complex catalytic subunit sec11 (sec11) from Talaromyces marneffei (strain ATCC 18224 / CBS 334.59 / QM 7333) (Penicillium marneffei).